The sequence spans 215 residues: Phosphatidylserine decarboxylase proenzyme (215 aa).

S184 serves as the catalytic Schiff-base intermediate with substrate; via pyruvic acid. A Pyruvic acid (Ser); by autocatalysis modification is found at S184.

The protein belongs to the phosphatidylserine decarboxylase family. PSD-A subfamily. In terms of assembly, heterodimer of a large membrane-associated beta subunit and a small pyruvoyl-containing alpha subunit. Pyruvate serves as cofactor. Is synthesized initially as an inactive proenzyme. Formation of the active enzyme involves a self-maturation process in which the active site pyruvoyl group is generated from an internal serine residue via an autocatalytic post-translational modification. Two non-identical subunits are generated from the proenzyme in this reaction, and the pyruvate is formed at the N-terminus of the alpha chain, which is derived from the carboxyl end of the proenzyme. The post-translation cleavage follows an unusual pathway, termed non-hydrolytic serinolysis, in which the side chain hydroxyl group of the serine supplies its oxygen atom to form the C-terminus of the beta chain, while the remainder of the serine residue undergoes an oxidative deamination to produce ammonia and the pyruvoyl prosthetic group on the alpha chain.

It localises to the cell membrane. It catalyses the reaction a 1,2-diacyl-sn-glycero-3-phospho-L-serine + H(+) = a 1,2-diacyl-sn-glycero-3-phosphoethanolamine + CO2. It participates in phospholipid metabolism; phosphatidylethanolamine biosynthesis; phosphatidylethanolamine from CDP-diacylglycerol: step 2/2. Catalyzes the formation of phosphatidylethanolamine (PtdEtn) from phosphatidylserine (PtdSer). The protein is Phosphatidylserine decarboxylase proenzyme of Ralstonia nicotianae (strain ATCC BAA-1114 / GMI1000) (Ralstonia solanacearum).